Consider the following 316-residue polypeptide: LIM/homeobox protein lim-6 (316 aa).

LIM zinc-binding domains follow at residues 40-101 (KLCS…LYGK) and 102-163 (RCRR…ICNF). The segment at residues 186-245 (PKRPRTILNAQQRRQFKTAFERSSKPSRKVREQLANETGLSVRVVQVWFQNQRAKIKKLN) is a DNA-binding region (homeobox). Residues 244–297 (LNKKDSDSGDTFKHGPGSEGRSTEDIRSSDDEEESVINLDADEVETSETSSYTD) are disordered. Residues 246-256 (KKDSDSGDTFK) show a composition bias toward basic and acidic residues. Over residues 273 to 289 (DDEEESVINLDADEVET) the composition is skewed to acidic residues.

It is found in the nucleus. In terms of biological role, transcription factor. Required for the terminal differentiation of sensory- and motor-neurons, especially GABAergic neurons, and for morphological aspects of uterine development. Plays a role in the cell-type-specific regulation of glutamic acid decarboxylase unc-25. Involved in promoting sleep-like behavioral quiescence, acting by modulating expression of transcription factor aptf-1 in the single sleep-active ring interneuron RIS. Plays a role in regulation of RIS differentiation. Required for the functional asymmetry of the ASER and ASEL chemosensory neuron pair, conferring the ability to discriminate sodium from chloride, perhaps by modulating expression of receptor-type guanylate cyclases, such as gcy-5. Involved in regulating postembryonic axon maintenance in the ventral nerve cord, acting in concert with LIM homeobox protein ceh-14, via modulation of expression of immunoglobulin domain zig genes in the interneuron PVT. May play a role in the functions of the excretory gland cell. The chain is LIM/homeobox protein lim-6 from Caenorhabditis elegans.